We begin with the raw amino-acid sequence, 334 residues long: Methionine import ATP-binding protein MetN (334 aa).

Residues 7-246 (VEFRSVSKVF…PRSAPARAFV (240 aa)) form the ABC transporter domain. Residue 43–50 (GYSGAGKS) coordinates ATP.

Belongs to the ABC transporter superfamily. Methionine importer (TC 3.A.1.24) family. The complex is composed of two ATP-binding proteins (MetN), two transmembrane proteins (MetI) and a solute-binding protein (MetQ).

Its subcellular location is the cell membrane. The catalysed reaction is L-methionine(out) + ATP + H2O = L-methionine(in) + ADP + phosphate + H(+). It carries out the reaction D-methionine(out) + ATP + H2O = D-methionine(in) + ADP + phosphate + H(+). Part of the ABC transporter complex MetNIQ involved in methionine import. Responsible for energy coupling to the transport system. This is Methionine import ATP-binding protein MetN from Nocardia farcinica (strain IFM 10152).